We begin with the raw amino-acid sequence, 144 residues long: Large ribosomal subunit protein uL11 (144 aa).

Belongs to the universal ribosomal protein uL11 family. In terms of assembly, part of the ribosomal stalk of the 50S ribosomal subunit. Interacts with L10 and the large rRNA to form the base of the stalk. L10 forms an elongated spine to which L12 dimers bind in a sequential fashion forming a multimeric L10(L12)X complex. Post-translationally, one or more lysine residues are methylated.

Functionally, forms part of the ribosomal stalk which helps the ribosome interact with GTP-bound translation factors. The polypeptide is Large ribosomal subunit protein uL11 (Parafrankia sp. (strain EAN1pec)).